Reading from the N-terminus, the 617-residue chain is MDFSKLPKIRDEDKESTFGYVHGVSGPVVTACDMAGAAMYELVRVGHSELVGEIIRLEGDMATIQVYEETSGVSVGDPVLRTGKPLSVELGPGIMGAIFDGIQRPLSDISSQTQSIYIPRGVNVSALSRDVKWDFTPCKNLRVGSHITGGDIYGIVNENSLIKHKIMLPPRNRGTVTYIAPPGNYDTSDVVLELEFEGIKEKFSMVQVWPVRQVRPVTEKLPANHPLLTGQRVLDALFPCVQGGTTAIPGAFGCGKTVISQSLSKYSNSDVIIYVGCGERGNEMSEVLRDFPELTMEVDGKVESIMKRTALVANTSNMPVAAREASIYTGITLSEYFRDMGYHVSMMADSTSRWAEALREISGRLAEMPADSGYPAYLGARLASFYERAGRVKCLGNPEREGSVSIVGAVSPPGGDFSDPVTSATLGIVQVFWGLDKKLAQRKHFPSVNWLISYSKYMRALDEYYDKHFTEFVPLRTKAKEILQEEEDLAEIVQLVGKASLAETDKITLEVAKLIKDDFLQQNGYTPYDRFCPFYKTVGMLSNMIAFYDMARRAVETTAQSDNKITWSIIREHMGEILYKLSSMKFKDPVKDGEAKIKADYAQLLEDMQNAFRSLED.

Threonine 136 carries the post-translational modification Phosphothreonine. 250 to 257 provides a ligand contact to ATP; that stretch reads GAFGCGKT. Serine 384 bears the Phosphoserine; by AMPK mark.

Belongs to the ATPase alpha/beta chains family. As to quaternary structure, V-ATPase is a heteromultimeric enzyme made up of two complexes: the ATP-hydrolytic V1 complex and the proton translocation V0 complex. The V1 complex consists of three catalytic AB heterodimers that form a heterohexamer, three peripheral stalks each consisting of EG heterodimers, one central rotor including subunits D and F, and the regulatory subunits C and H. The proton translocation complex V0 consists of the proton transport subunit a, a ring of proteolipid subunits c9c'', rotary subunit d, subunits e and f, and the accessory subunits ATP6AP1/Ac45 and ATP6AP2/PRR. Interacts with the V0 complex V-ATPase subunit a4 ATP6V0A4. Interacts with WFS1. Interacts with alpha-crystallin B chain/CRYAB and with MTOR, forming a ternary complex. Post-translationally, phosphorylation at Ser-384 by AMPK down-regulates its enzyme activity. In terms of tissue distribution, expressed in brain (at protein level).

Its subcellular location is the cytoplasm. It is found in the cytosol. It localises to the cytoplasmic vesicle. The protein resides in the secretory vesicle. The protein localises to the clathrin-coated vesicle membrane. Its subcellular location is the lysosome. The enzyme catalyses ATP + H2O + 4 H(+)(in) = ADP + phosphate + 5 H(+)(out). Its activity is regulated as follows. ATP hydrolysis occurs at the interface between the nucleotide-binding domains of subunits A and B. ATP hydrolysis triggers a conformational change in the subunits D and F, which induces a shift of subunit d. The c-ring is subsequently rotated and results in a continuous proton translocation across the membrane. The V-ATPase is inhibited by bafilomycin A. Functionally, catalytic subunit of the V1 complex of vacuolar(H+)-ATPase (V-ATPase), a multisubunit enzyme composed of a peripheral complex (V1) that hydrolyzes ATP and a membrane integral complex (V0) that translocates protons. V-ATPase is responsible for acidifying and maintaining the pH of intracellular compartments and in some cell types, is targeted to the plasma membrane, where it is responsible for acidifying the extracellular environment. In aerobic conditions, involved in intracellular iron homeostasis, thus triggering the activity of Fe(2+) prolyl hydroxylase (PHD) enzymes, and leading to HIF1A hydroxylation and subsequent proteasomal degradation. May play a role in neurite development and synaptic connectivity. In Bos taurus (Bovine), this protein is V-type proton ATPase catalytic subunit A (ATP6V1A).